An 802-amino-acid polypeptide reads, in one-letter code: MSFNHQEIEKKWQGYWEENKTFRTPDETEKPKFYALDMFPYPSGAGLHVGHPEGYTATDILSRMKRMQGYNVLHPMGWDAFGLPAEQYALDTGNSPAEFTEHNINTFRNQIKSLGFSYDWDREVNTTDPNYYKWTQWIFLKLFEKGLAYVDEVPVNWCPALGTVLANEEIIDGKSERGGHPVERRPMRQWMLKITAYGDRLLEDLDELDWPESLKDMQRNWIGRSEGAEVHFNIDGTDEKFTVFTTRPDTLFGASYCVLAPEHALVADITTADQKEAVEAYINSVKMKSDLERTELAKEKTGVFTGAYAVNPVNGEKLPIWIADYVLATYGTGAVMAVPAHDERDYEFASTFNLPMKEVVKGGDITKEAYTGDGAHVNSAFLDGLNKEEAIAKMIEWLEVTSAGNQKVTYRLRDWLFSRQRYWGEPIPVIHWEDGTMTAVKEEELPLVLPKTENIRPSGTGESPLANIDEWVNVVDPETGKKGRRETNTMPQWAGSCWYYLRYIDPNNSEALVDPEKVKQWLPVDIYIGGAEHAVLHLLYARFWHKVLYDIGVVPTKEPFQQLFNQGMILGENNEKMSKSKGNVVNPDDIVASHGADTLRLYEMFMGPLDASIAWSENGLDGARRFLDRVWRLFVQDNGELSEKITDAPNKDLEKAYHQTVKKVTEDYAELRFNTAISQMMVFINDAYKAETLPKEYVEGFVKMIAPVAPHIGEELWSKLGYNETITYASWPTFDESKLVEDEVEIVVQVMGKVRAKLTMSKDASKDEMEKLALEAIQDQIEGKTVRKVIVVPGKLVNVVAN.

A 'HIGH' region motif is present at residues 40–51 (PYPSGAGLHVGH). The 'KMSKS' region signature appears at 576–580 (KMSKS). K579 lines the ATP pocket.

This sequence belongs to the class-I aminoacyl-tRNA synthetase family.

It is found in the cytoplasm. It carries out the reaction tRNA(Leu) + L-leucine + ATP = L-leucyl-tRNA(Leu) + AMP + diphosphate. The protein is Leucine--tRNA ligase of Bacillus anthracis (strain A0248).